A 341-amino-acid chain; its full sequence is L-threonine 3-dehydrogenase (341 aa).

Cys-38 lines the Zn(2+) pocket. Catalysis depends on charge relay system residues Thr-40 and His-43. Positions 63, 64, 93, 96, 99, and 107 each coordinate Zn(2+). NAD(+) is bound by residues Ile-175, Asp-195, Arg-200, 262 to 264 (LGI), and 286 to 287 (IY).

It belongs to the zinc-containing alcohol dehydrogenase family. In terms of assembly, homotetramer. The cofactor is Zn(2+).

It localises to the cytoplasm. The catalysed reaction is L-threonine + NAD(+) = (2S)-2-amino-3-oxobutanoate + NADH + H(+). It participates in amino-acid degradation; L-threonine degradation via oxydo-reductase pathway; glycine from L-threonine: step 1/2. Functionally, catalyzes the NAD(+)-dependent oxidation of L-threonine to 2-amino-3-ketobutyrate. This Yersinia pestis bv. Antiqua (strain Antiqua) protein is L-threonine 3-dehydrogenase.